A 525-amino-acid chain; its full sequence is Retinoblastoma-binding-like protein E (525 aa).

5 WD repeats span residues 25–66, 69–108, 222–261, 267–312, and 313–352; these read PKNI…IVRT, HHTG…ILYS, SSNT…LYQQ, DSVN…KDLE, and GPKE…NWSS. Disordered stretches follow at residues 371–398 and 462–525; these read DEFD…RNPY and EKYQ…KKRK. Over residues 383-392 the composition is skewed to low complexity; that stretch reads QEVNNNNNNN. The span at 462–471 shows a compositional bias: basic and acidic residues; the sequence is EKYQKDKEDS. The segment covering 472-500 has biased composition (low complexity); that stretch reads SSTTSNSTISSSSSPSPSSSSTTTTTTTS. Residues 501–525 are compositionally biased toward basic and acidic residues; that stretch reads QKKDETQKKEKSTKKERNSDSKKRK.

Its subcellular location is the nucleus. Involved in mono-, di- and trimethylation at 'Lys-4' of histone H3. Histone H3 'Lys-4' methylation represents a specific tag for epigenetic transcriptional activation. This is Retinoblastoma-binding-like protein E from Dictyostelium discoideum (Social amoeba).